We begin with the raw amino-acid sequence, 338 residues long: Taste receptor type 2 member 39 (338 aa).

At 1-30 the chain is on the extracellular side; it reads MLGRCFPPNTKEKQQLRMIKLCDPAESELS. A helical membrane pass occupies residues 31 to 51; that stretch reads PFLITLTLAVLLAEYLTGIIA. Residues 52 to 74 lie on the Cytoplasmic side of the membrane; sequence NGFITAIHAAECVQNKSVSTSGR. A helical membrane pass occupies residues 75-95; sequence ILVFLSVSRIALQSLMMLEIT. Topologically, residues 96-116 are extracellular; sequence ISSTSLSFYSEDTVYYAFKIS. The chain crosses the membrane as a helical span at residues 117–137; sequence FIFLNFCSLWFAAWLSFFYFV. The Cytoplasmic segment spans residues 138 to 156; that stretch reads KIANFSYPLFLKLRWRISG. The chain crosses the membrane as a helical span at residues 157–177; sequence LIPWLLWLSVFISFSHSMFCI. Residues 178–205 lie on the Extracellular side of the membrane; sequence NICTGYCDNSFPIHSSNSTEKTYFSEIS. N-linked (GlcNAc...) asparagine glycosylation is present at Asn-194. The chain crosses the membrane as a helical span at residues 206–226; it reads VVSLAFFFNLGIVIPLIMFIL. Residues 227-262 are Cytoplasmic-facing; the sequence is AAILLILSLKRHTLYMXSNATGSKDPSMEAHIGAIK. The chain crosses the membrane as a helical span at residues 263–283; it reads ATSYFLILYIFNAVALFIYLS. The Extracellular portion of the chain corresponds to 284-291; it reads NMFDINSL. The chain crosses the membrane as a helical span at residues 292–312; sequence WNTLCQIIMAAYPASHSILLI. The Cytoplasmic portion of the chain corresponds to 313–338; sequence KDNPGLRRAWKQLQHRLHLYPKEWTL.

The protein belongs to the G-protein coupled receptor T2R family.

The protein resides in the membrane. In terms of biological role, receptor that may play a role in the perception of bitterness and is gustducin-linked. May play a role in sensing the chemical composition of the gastrointestinal content. The activity of this receptor may stimulate alpha gustducin, mediate PLC-beta-2 activation and lead to the gating of TRPM5. This Papio hamadryas (Hamadryas baboon) protein is Taste receptor type 2 member 39 (TAS2R39).